The chain runs to 584 residues: Proteasome-associated ATPase (584 aa).

Positions 8–90 form a coiled coil; the sequence is RHAERDRDEL…KEEVDRLSQP (83 aa). 272–277 lines the ATP pocket; the sequence is GCGKTL. The segment at 583–584 is docks into pockets in the proteasome alpha-ring; it reads YL.

Belongs to the AAA ATPase family. In terms of assembly, homohexamer. Assembles into a hexameric ring structure that caps the 20S proteasome core. Strongly interacts with the prokaryotic ubiquitin-like protein Pup through a hydrophobic interface; the interacting region of ARC lies in its N-terminal coiled-coil domain. There is one Pup binding site per ARC hexamer ring. Upon ATP-binding, the C-terminus of ARC interacts with the alpha-rings of the proteasome core, possibly by binding to the intersubunit pockets.

The protein operates within protein degradation; proteasomal Pup-dependent pathway. In terms of biological role, ATPase which is responsible for recognizing, binding, unfolding and translocation of pupylated proteins into the bacterial 20S proteasome core particle. May be essential for opening the gate of the 20S proteasome via an interaction with its C-terminus, thereby allowing substrate entry and access to the site of proteolysis. Thus, the C-termini of the proteasomal ATPase may function like a 'key in a lock' to induce gate opening and therefore regulate proteolysis. This is Proteasome-associated ATPase from Thermobifida fusca (strain YX).